Consider the following 42-residue polypeptide: Cytochrome b6-f complex subunit 7 (42 aa).

Residues 19-37 (AVTCIFMTLFGLSLGFALL) form a helical membrane-spanning segment.

Belongs to the PetM family. The 4 large subunits of the cytochrome b6-f complex are cytochrome b6, subunit IV (17 kDa polypeptide, PetD), cytochrome f and the Rieske protein, while the 4 small subunits are PetG, PetL, PetM and PetN. The complex functions as a dimer.

Its subcellular location is the plastid. It is found in the chloroplast thylakoid membrane. In terms of biological role, component of the cytochrome b6-f complex, which mediates electron transfer between photosystem II (PSII) and photosystem I (PSI), cyclic electron flow around PSI, and state transitions. The polypeptide is Cytochrome b6-f complex subunit 7 (Thalassiosira pseudonana (Marine diatom)).